Here is a 206-residue protein sequence, read N- to C-terminus: Thiamine-phosphate synthase (206 aa).

4-amino-2-methyl-5-(diphosphooxymethyl)pyrimidine contacts are provided by residues 35–39 (QLRHK) and Asn67. Mg(2+) contacts are provided by Asp68 and Asp87. Ser106 serves as a coordination point for 4-amino-2-methyl-5-(diphosphooxymethyl)pyrimidine. 2-[(2R,5Z)-2-carboxy-4-methylthiazol-5(2H)-ylidene]ethyl phosphate is bound at residue 132–134 (TGS). Lys135 lines the 4-amino-2-methyl-5-(diphosphooxymethyl)pyrimidine pocket. Gly163 provides a ligand contact to 2-[(2R,5Z)-2-carboxy-4-methylthiazol-5(2H)-ylidene]ethyl phosphate.

The protein belongs to the thiamine-phosphate synthase family. It depends on Mg(2+) as a cofactor.

It catalyses the reaction 2-[(2R,5Z)-2-carboxy-4-methylthiazol-5(2H)-ylidene]ethyl phosphate + 4-amino-2-methyl-5-(diphosphooxymethyl)pyrimidine + 2 H(+) = thiamine phosphate + CO2 + diphosphate. It carries out the reaction 2-(2-carboxy-4-methylthiazol-5-yl)ethyl phosphate + 4-amino-2-methyl-5-(diphosphooxymethyl)pyrimidine + 2 H(+) = thiamine phosphate + CO2 + diphosphate. The catalysed reaction is 4-methyl-5-(2-phosphooxyethyl)-thiazole + 4-amino-2-methyl-5-(diphosphooxymethyl)pyrimidine + H(+) = thiamine phosphate + diphosphate. The protein operates within cofactor biosynthesis; thiamine diphosphate biosynthesis; thiamine phosphate from 4-amino-2-methyl-5-diphosphomethylpyrimidine and 4-methyl-5-(2-phosphoethyl)-thiazole: step 1/1. In terms of biological role, condenses 4-methyl-5-(beta-hydroxyethyl)thiazole monophosphate (THZ-P) and 2-methyl-4-amino-5-hydroxymethyl pyrimidine pyrophosphate (HMP-PP) to form thiamine monophosphate (TMP). The sequence is that of Thiamine-phosphate synthase from Chlorobium phaeobacteroides (strain DSM 266 / SMG 266 / 2430).